Reading from the N-terminus, the 288-residue chain is Pteridine reductase 1 (288 aa).

17-40 (RLGRSIAEGLHAEGYAVCLHYHRS) lines the NADP(+) pocket. Ser-175 lines the substrate pocket. Tyr-194 serves as the catalytic Proton acceptor.

This sequence belongs to the short-chain dehydrogenases/reductases (SDR) family. As to quaternary structure, homotetramer.

The enzyme catalyses (6R)-L-erythro-5,6,7,8-tetrahydrobiopterin + 2 NADP(+) = L-erythro-biopterin + 2 NADPH + 2 H(+). Its pathway is cofactor biosynthesis; tetrahydrobiopterin biosynthesis; tetrahydrobiopterin from biopterin: step 1/1. Exhibits a NADPH-dependent biopterin reductase activity. Has good activity with folate and significant activity with dihydrofolate and dihydrobiopterin, but not with quinonoid dihydrobiopterin. Confers resistance to methotrexate (MTX). This is Pteridine reductase 1 (PTR1) from Leishmania major.